We begin with the raw amino-acid sequence, 723 residues long: Aspartate--tRNA(Asp/Asn) ligase 1 (723 aa).

Glu-206 contacts L-aspartate. Positions 230 to 233 (QLFK) are aspartate. Arg-252 lines the L-aspartate pocket. ATP is bound by residues 252–254 (RDE) and Gln-261. Position 481 (His-481) interacts with L-aspartate. Glu-516 is a binding site for ATP. Arg-523 serves as a coordination point for L-aspartate. Position 568 to 571 (568 to 571 (GMDR)) interacts with ATP.

This sequence belongs to the class-II aminoacyl-tRNA synthetase family. Type 1 subfamily. In terms of assembly, homodimer.

The protein resides in the cytoplasm. The catalysed reaction is tRNA(Asx) + L-aspartate + ATP = L-aspartyl-tRNA(Asx) + AMP + diphosphate. Its function is as follows. Aspartyl-tRNA synthetase with relaxed tRNA specificity since it is able to aspartylate not only its cognate tRNA(Asp) but also tRNA(Asn). Reaction proceeds in two steps: L-aspartate is first activated by ATP to form Asp-AMP and then transferred to the acceptor end of tRNA(Asp/Asn). The chain is Aspartate--tRNA(Asp/Asn) ligase 1 from Syntrophus aciditrophicus (strain SB).